A 295-amino-acid chain; its full sequence is uncharacterized protein (295 aa).

One can recognise an HTH araC/xylS-type domain in the interval 8–106 (QKTINWIESH…HMPPGAYRTF (99 aa)). The H-T-H motif DNA-binding region spans 25-46 (EDIVNVSSFSKFHFHRIFQKEV).

Functionally, probable transcriptional regulator. This is an uncharacterized protein from Bacillus subtilis (strain 168).